The following is a 195-amino-acid chain: Interferon tau-6 (195 aa).

An N-terminal signal peptide occupies residues methionine 1 to glycine 23. Disulfide bonds link cysteine 24–cysteine 122 and cysteine 52–cysteine 162. An N-linked (GlcNAc...) asparagine glycan is attached at asparagine 101.

Belongs to the alpha/beta interferon family. IFN-alphaII subfamily. As to expression, constitutively and exclusively expressed in the mononuclear cells of the extraembryonic trophectoderm.

The protein resides in the secreted. Paracrine hormone primarily responsible for maternal recognition of pregnancy. Interacts with endometrial receptors, probably type I interferon receptors, and blocks estrogen receptor expression, preventing the estrogen-induced increase in oxytocin receptor expression in the endometrium. This results in the suppression of the pulsatile endometrial release of the luteolytic hormone prostaglandin F2-alpha, hindering the regression of the corpus luteum (luteolysis) and therefore a return to ovarian cyclicity. This, and a possible direct effect of IFN-tau on prostaglandin synthesis, leads in turn to continued ovarian progesterone secretion, which stimulates the secretion by the endometrium of the nutrients required for the growth of the conceptus. In summary, displays particularly high antiviral and antiproliferative potency concurrently with particular weak cytotoxicity, high antiluteolytic activity and immunomodulatory properties. In contrast with other IFNs, IFN-tau is not virally inducible. The chain is Interferon tau-6 (IFNT6) from Ovis aries (Sheep).